The sequence spans 561 residues: Putative periplasmic trehalase (561 aa).

The signal sequence occupies residues M1–A30. Residues R148, W155 to D156, N192, R201 to Q203, R273 to E275, and G306 each bind substrate. Catalysis depends on proton donor/acceptor residues D308 and E492. E507 contacts substrate. Positions C535–P561 are disordered.

This sequence belongs to the glycosyl hydrolase 37 family. Monomer.

Its subcellular location is the periplasm. It carries out the reaction alpha,alpha-trehalose + H2O = alpha-D-glucose + beta-D-glucose. Functionally, provides the cells with the ability to utilize trehalose at high osmolarity by splitting it into glucose molecules that can subsequently be taken up by the phosphotransferase-mediated uptake system. The sequence is that of Putative periplasmic trehalase from Escherichia coli O157:H7.